The chain runs to 179 residues: MNRLKEKFNSEVTQNLVKQFDYSSVMEVPKIEKIVVNMGVGDAVQNTKVLDDAVEELQAITGQKPLITKAKKSVATFRLREGMPIGAKVTLRGERMYDFLDKLIAVSLPRVRDFQGVSKTAFDGRGNYTLGVKEQLIFPEIDYDRVNKVRGMDIVIVTTANTDEEARELLSQFGMPFHK.

The protein belongs to the universal ribosomal protein uL5 family. Part of the 50S ribosomal subunit; part of the 5S rRNA/L5/L18/L25 subcomplex. Contacts the 5S rRNA and the P site tRNA. Forms a bridge to the 30S subunit in the 70S ribosome.

Its function is as follows. This is one of the proteins that bind and probably mediate the attachment of the 5S RNA into the large ribosomal subunit, where it forms part of the central protuberance. In the 70S ribosome it contacts protein S13 of the 30S subunit (bridge B1b), connecting the 2 subunits; this bridge is implicated in subunit movement. Contacts the P site tRNA; the 5S rRNA and some of its associated proteins might help stabilize positioning of ribosome-bound tRNAs. This Staphylococcus saprophyticus subsp. saprophyticus (strain ATCC 15305 / DSM 20229 / NCIMB 8711 / NCTC 7292 / S-41) protein is Large ribosomal subunit protein uL5.